Reading from the N-terminus, the 505-residue chain is Probable glycine dehydrogenase (decarboxylating) subunit 2 (505 aa).

K274 is subject to N6-(pyridoxal phosphate)lysine.

This sequence belongs to the GcvP family. C-terminal subunit subfamily. As to quaternary structure, the glycine cleavage system is composed of four proteins: P, T, L and H. In this organism, the P 'protein' is a heterodimer of two subunits. The cofactor is pyridoxal 5'-phosphate.

It catalyses the reaction N(6)-[(R)-lipoyl]-L-lysyl-[glycine-cleavage complex H protein] + glycine + H(+) = N(6)-[(R)-S(8)-aminomethyldihydrolipoyl]-L-lysyl-[glycine-cleavage complex H protein] + CO2. Its function is as follows. The glycine cleavage system catalyzes the degradation of glycine. The P protein binds the alpha-amino group of glycine through its pyridoxal phosphate cofactor; CO(2) is released and the remaining methylamine moiety is then transferred to the lipoamide cofactor of the H protein. This Sulfurisphaera tokodaii (strain DSM 16993 / JCM 10545 / NBRC 100140 / 7) (Sulfolobus tokodaii) protein is Probable glycine dehydrogenase (decarboxylating) subunit 2.